We begin with the raw amino-acid sequence, 361 residues long: Phospho-N-acetylmuramoyl-pentapeptide-transferase (361 aa).

10 helical membrane-spanning segments follow: residues Leu-28–Leu-48, Thr-74–Leu-94, Ile-99–Ala-119, Ser-133–Asp-153, Leu-168–Ser-188, Val-203–Ile-223, Thr-236–Phe-256, Val-263–Ile-283, Val-288–Val-308, and Lys-338–Leu-358.

It belongs to the glycosyltransferase 4 family. MraY subfamily. Mg(2+) is required as a cofactor.

Its subcellular location is the cell inner membrane. The enzyme catalyses UDP-N-acetyl-alpha-D-muramoyl-L-alanyl-gamma-D-glutamyl-meso-2,6-diaminopimeloyl-D-alanyl-D-alanine + di-trans,octa-cis-undecaprenyl phosphate = di-trans,octa-cis-undecaprenyl diphospho-N-acetyl-alpha-D-muramoyl-L-alanyl-D-glutamyl-meso-2,6-diaminopimeloyl-D-alanyl-D-alanine + UMP. It functions in the pathway cell wall biogenesis; peptidoglycan biosynthesis. Catalyzes the initial step of the lipid cycle reactions in the biosynthesis of the cell wall peptidoglycan: transfers peptidoglycan precursor phospho-MurNAc-pentapeptide from UDP-MurNAc-pentapeptide onto the lipid carrier undecaprenyl phosphate, yielding undecaprenyl-pyrophosphoryl-MurNAc-pentapeptide, known as lipid I. This Rickettsia canadensis (strain McKiel) protein is Phospho-N-acetylmuramoyl-pentapeptide-transferase.